The primary structure comprises 530 residues: Glucose-6-phosphate isomerase (530 aa).

Glu-356 functions as the Proton donor in the catalytic mechanism. Residues His-387 and Lys-502 contribute to the active site.

Belongs to the GPI family.

The protein resides in the cytoplasm. It catalyses the reaction alpha-D-glucose 6-phosphate = beta-D-fructose 6-phosphate. It participates in carbohydrate biosynthesis; gluconeogenesis. The protein operates within carbohydrate degradation; glycolysis; D-glyceraldehyde 3-phosphate and glycerone phosphate from D-glucose: step 2/4. Functionally, catalyzes the reversible isomerization of glucose-6-phosphate to fructose-6-phosphate. This chain is Glucose-6-phosphate isomerase, found in Borreliella burgdorferi (strain ATCC 35210 / DSM 4680 / CIP 102532 / B31) (Borrelia burgdorferi).